A 261-amino-acid chain; its full sequence is Undecaprenyl-diphosphatase (261 aa).

Transmembrane regions (helical) follow at residues 1 to 21 (MNYIQAIILAIIEGITEFLPV), 41 to 61 (FTKLFTIVIQLGAILSVVVLY), 69 to 89 (LDFYFKLLVAFIPAVVLGLLF), 95 to 115 (ALLESPVTVAVSLLVGGIILL), 129 to 149 (ITYLKAFKIGLFQCIAMIPGV), 169 to 186 (AAEFSFFLAVPTMLGATL), 206 to 226 (ILIIGNIVAFLVALLAIKTFI), and 241 to 261 (RIVAGIVLLLIHFFIHPLTLI).

Belongs to the UppP family.

Its subcellular location is the cell inner membrane. The enzyme catalyses di-trans,octa-cis-undecaprenyl diphosphate + H2O = di-trans,octa-cis-undecaprenyl phosphate + phosphate + H(+). Its function is as follows. Catalyzes the dephosphorylation of undecaprenyl diphosphate (UPP). Confers resistance to bacitracin. The sequence is that of Undecaprenyl-diphosphatase from Flavobacterium psychrophilum (strain ATCC 49511 / DSM 21280 / CIP 103535 / JIP02/86).